A 1998-amino-acid polypeptide reads, in one-letter code: Histone acetyltransferase KAT6A (1998 aa).

The SAMD1-like winged helix (WH) domain maps to Met1 to Pro77. A required for activation of RUNX1-1 region spans residues Met1–His144. The interval Glu52 to Leu166 is required for nuclear localization. Positions Lys72–Asn93 are disordered. The H15 domain maps to Gln95–Thr171. The tract at residues His144–Asp662 is interaction with PML. Lys172 is subject to N6-acetyllysine. 2 PHD-type zinc fingers span residues Asp199–Gln258 and Leu255–Ile306. Residues Pro312 to Asp662 form an interaction with RUNX1-1 region. Residues Gly336–Ser377 are disordered. N6-acetyllysine occurs at positions 350 and 355. The residue at position 369 (Thr369) is a Phosphothreonine; by PKB/AKT1. Phosphoserine is present on Ser419. The segment at Lys440–Ser464 is disordered. Over residues Lys444–Gly457 the composition is skewed to polar residues. The residue at position 471 (Ser471) is a Phosphoserine. The catalytic stretch occupies residues Ile486–Pro776. An MYST-type HAT domain is found at Pro502–Pro776. Residues Arg505–Glu808 form a mediates interaction with BRPF1, required for histone H3 acetyltransferase activity region. The segment at Leu535–Trp560 adopts a C2HC MYST-type zinc-finger fold. Lys602 carries the N6-acetyllysine; by autocatalysis modification. Residues Ser643–Ile647 and Gln652–Arg658 each bind acetyl-CoA. Residue Glu678 is the Proton donor/acceptor of the active site. Ser682 serves as a coordination point for acetyl-CoA. Residues Val783 to Arg947 form a disordered region. Ser785 bears the Phosphoserine mark. Residues Ser785–Lys797 show a composition bias toward acidic residues. The segment covering Glu798–Glu840 has biased composition (basic and acidic residues). Lys815 carries the N6-acetyllysine modification. Residue Lys835 forms a Glycyl lysine isopeptide (Lys-Gly) (interchain with G-Cter in SUMO2) linkage. Positions Arg865–Arg874 are enriched in basic residues. The segment covering Lys875–Lys886 has biased composition (basic and acidic residues). Tyr900 is modified (phosphotyrosine). Over residues Cys903–Glu916 the composition is skewed to basic and acidic residues. Ser940 and Ser953 each carry phosphoserine. A disordered region spans residues Gly982 to Phe1079. Lys1006 is subject to N6-acetyllysine. Positions Thr1008–Asn1029 are enriched in basic residues. The segment covering Ser1030–Thr1041 has biased composition (low complexity). 2 stretches are compositionally biased toward acidic residues: residues Glu1042 to Asp1052 and Phe1064 to Glu1077. Ser1088, Ser1089, and Ser1114 each carry phosphoserine. 4 disordered regions span residues Gln1096–Lys1175, Pro1195–Tyr1436, Gln1450–Gly1567, and Thr1630–Asn1702. The span at Asp1106–Asp1119 shows a compositional bias: acidic residues. Over residues Asn1135–Pro1146 the composition is skewed to polar residues. Residues Met1147–Gly1173 are compositionally biased toward basic residues. Residues Arg1203–Glu1228 show a composition bias toward basic and acidic residues. 2 stretches are compositionally biased toward acidic residues: residues Ala1229 to Ala1240 and Glu1281 to Thr1298. Basic and acidic residues-rich tracts occupy residues His1316 to Asp1333, Asp1351 to Asp1360, and Asp1392 to Leu1413. Residues His1472–Pro1496 are compositionally biased toward low complexity. Residues Gly1501 to Thr1522 are compositionally biased toward polar residues. The interval Gly1510 to Arg1635 is interaction with RUNX1-2. An interaction with PML region spans residues Gly1510 to Ala1735. Positions Asp1527 to Ser1541 are enriched in low complexity. Residues Ile1549–Gly1567 are compositionally biased toward polar residues. Pro residues-rich tracts occupy residues Asn1639–Gln1658 and Pro1665–Gln1693. The required for activation of RUNX1-2 stretch occupies residues Ser1907–Gln1942.

It belongs to the MYST (SAS/MOZ) family. In terms of assembly, component of the MOZ/MORF complex composed at least of ING5, KAT6A, KAT6B, MEAF6 and one of BRPF1, BRD1/BRPF2 and BRPF3. Interacts with RUNX1; phosphorylation of RUNX1 enhances the interaction. Interacts with RUNX2. Interacts with p53/TP53. Interacts with PML and this interaction positively regulates its acetylation activity towards p53/TP53. Post-translationally, autoacetylated. Autoacetylation at Lys-602 is required for proper function. Phosphorylation at Thr-369 by PKB/AKT1 inhibits its interaction with PML and negatively regulates its acetylation activity towards p53/TP53.

The protein resides in the nucleus. Its subcellular location is the nucleolus. It localises to the nucleoplasm. The protein localises to the PML body. The catalysed reaction is L-lysyl-[protein] + acetyl-CoA = N(6)-acetyl-L-lysyl-[protein] + CoA + H(+). Histone acetyltransferase that acetylates lysine residues in histone H3 and histone H4 (in vitro). Component of the MOZ/MORF complex which has a histone H3 acetyltransferase activity. May act as a transcriptional coactivator for RUNX1 and RUNX2. Acetylates p53/TP53 at 'Lys-120' and 'Lys-382' and controls its transcriptional activity via association with PML. In Rattus norvegicus (Rat), this protein is Histone acetyltransferase KAT6A (Kat6a).